We begin with the raw amino-acid sequence, 764 residues long: Complement factor B (764 aa).

Positions 1 to 25 (MGSNLSPQLCLMPFILGLLSGGVTT) are cleaved as a signal peptide. 3 consecutive Sushi domains span residues 35-100 (ESCS…ECRA), 101-160 (IHCP…ICDN), and 163-220 (GYCS…SCQD). Intrachain disulfides connect Cys37–Cys76, Cys62–Cys98, Cys103–Cys145, Cys131–Cys158, Cys165–Cys205, and Cys191–Cys218. N-linked (GlcNAc...) asparagine glycans are attached at residues Asn122 and Asn142. Residues 270 to 469 (NIYLVLDGSD…NLEDVFYQMI (200 aa)) enclose the VWFA domain. Mg(2+)-binding residues include Ser278 and Ser280. Asn285 carries N-linked (GlcNAc...) asparagine glycosylation. Position 353 (Thr353) interacts with Mg(2+). Asn378 carries an N-linked (GlcNAc...) asparagine glycan. Positions 477–757 (LCGMVWEHRK…VLPWLKEKLQ (281 aa)) constitute a Peptidase S1 domain. Intrachain disulfides connect Cys478–Cys596, Cys511–Cys527, Cys599–Cys615, Cys656–Cys682, and Cys695–Cys725. Catalysis depends on charge relay system residues His526 and Asp576. The active-site Charge relay system is the Ser699.

The protein belongs to the peptidase S1 family. As to quaternary structure, monomer. Interacts with complement C3b; this interaction is dependent on the presence of Mg(2+). In terms of assembly, catalytic component of the C3 convertase of the alternative complement pathway, also named C3bBb, composed of complement factor B Bb and complement C3b. Catalytic component of the C5 convertase of the alternative complement pathway, also named C3bBb3b, composed of complement factor B Bb and additional molecules of complement C3b. Interacts to CFP; this interaction contributes to the stabilization of the active C3-convertase enzyme complex. The cofactor is Mg(2+). Requires Mn(2+) as cofactor. Cleaved by CFD following activation of the alternative complement system, generating Ba and Bb chains. Cleavage and activation takes place when CFB is already associated with complement C3b.

It is found in the secreted. The protein localises to the cell surface. It carries out the reaction Cleavage of Arg-|-Ser bond in complement component C3 alpha-chain to yield C3a and C3b, and Arg-|-Xaa bond in complement component C5 alpha-chain to yield C5a and C5b.. Functionally, precursor of the catalytic component of the C3 and C5 convertase complexes of the alternative pathway of the complement system, a cascade of proteins that leads to phagocytosis and breakdown of pathogens and signaling that strengthens the adaptive immune system. The alternative complement pathway acts as an amplification loop that enhances other complement pathways (classical, lectin and GZMK) by promoting formation of additional C3 and C5 convertases. CFB is cleaved and activated by CFD to generate Ba and Bb chains; Bb chain constituting the catalytic component of the C3 and C5 convertases. In terms of biological role, serine protease component of the complement C3 and C5 convertase complexes of the alternative complement pathway. Following cleavage and activation by factor D (CFD), forms the C3 convertase together with complement C3b. As part of the C3 convertase, cleaves and activates C3 into C3a anaphylatoxin and C3b opsonin, the next components of the complement pathways. When an additional complement C3b molecule binds to the C3 convertase, forms the C5 convertase, which cleaves and activates C5 into C5a anaphylatoxin and C5b component of the membrane attack complex. Its function is as follows. Involved in proliferation and differentiation of preactivated B-lymphocytes, rapid spreading of peripheral blood monocytes, stimulation of lymphocyte blastogenesis and lysis of erythrocytes. In Pan troglodytes (Chimpanzee), this protein is Complement factor B (CFB).